The primary structure comprises 238 residues: Sugar fermentation stimulation protein homolog (238 aa).

It belongs to the SfsA family.

In Histophilus somni (strain 129Pt) (Haemophilus somnus), this protein is Sugar fermentation stimulation protein homolog.